A 164-amino-acid polypeptide reads, in one-letter code: Large ribosomal subunit protein uL10 (164 aa).

It belongs to the universal ribosomal protein uL10 family. As to quaternary structure, part of the ribosomal stalk of the 50S ribosomal subunit. The N-terminus interacts with L11 and the large rRNA to form the base of the stalk. The C-terminus forms an elongated spine to which L12 dimers bind in a sequential fashion forming a multimeric L10(L12)X complex.

Its function is as follows. Forms part of the ribosomal stalk, playing a central role in the interaction of the ribosome with GTP-bound translation factors. This is Large ribosomal subunit protein uL10 from Photobacterium profundum (strain SS9).